The chain runs to 348 residues: Large ribosomal subunit protein uL3m (348 aa).

The transit peptide at 1–40 directs the protein to the mitochondrion; it reads MPGWRLLTQVGAQVLGRLGDGLGAALGPGNRTHIWLFVRG.

Belongs to the universal ribosomal protein uL3 family. As to quaternary structure, component of the mitochondrial large ribosomal subunit (mt-LSU). Mature mammalian 55S mitochondrial ribosomes consist of a small (28S) and a large (39S) subunit. The 28S small subunit contains a 12S ribosomal RNA (12S mt-rRNA) and 30 different proteins. The 39S large subunit contains a 16S rRNA (16S mt-rRNA), a copy of mitochondrial valine transfer RNA (mt-tRNA(Val)), which plays an integral structural role, and 52 different proteins.

The protein resides in the mitochondrion. The sequence is that of Large ribosomal subunit protein uL3m (MRPL3) from Homo sapiens (Human).